The chain runs to 70 residues: Small ribosomal subunit protein bS21B (70 aa).

Positions 37–70 (SYEKPTTERKRKKAAAVARLRKQVRRSMPPKKKY) are disordered. The segment covering 45–70 (RKRKKAAAVARLRKQVRRSMPPKKKY) has biased composition (basic residues).

It belongs to the bacterial ribosomal protein bS21 family.

The chain is Small ribosomal subunit protein bS21B from Burkholderia pseudomallei (strain K96243).